Here is a 907-residue protein sequence, read N- to C-terminus: Alanine--tRNA ligase (907 aa).

Zn(2+)-binding residues include His581, His585, Cys683, and His687.

It belongs to the class-II aminoacyl-tRNA synthetase family. The cofactor is Zn(2+).

The protein resides in the cytoplasm. The enzyme catalyses tRNA(Ala) + L-alanine + ATP = L-alanyl-tRNA(Ala) + AMP + diphosphate. In terms of biological role, catalyzes the attachment of alanine to tRNA(Ala) in a two-step reaction: alanine is first activated by ATP to form Ala-AMP and then transferred to the acceptor end of tRNA(Ala). Also edits incorrectly charged Ser-tRNA(Ala) and Gly-tRNA(Ala) via its editing domain. The polypeptide is Alanine--tRNA ligase (Bdellovibrio bacteriovorus (strain ATCC 15356 / DSM 50701 / NCIMB 9529 / HD100)).